Reading from the N-terminus, the 209-residue chain is Mitochondrial import inner membrane translocase subunit Tim23 (209 aa).

The next 3 helical transmembrane spans lie at 73-93 (FELA…FGAL), 125-145 (ALWA…GVII), and 181-197 (GLAG…YNNW).

Belongs to the Tim17/Tim22/Tim23 family. In terms of assembly, component of the TIM23 complex at least composed of TIMM23, TIMM17 (TIMM17A or TIMM17B) and TIMM50; within this complex, directly interacts with TIMM50. The complex interacts with the TIMM44 component of the PAM complex and with DNAJC15. Upon mitochondrial depolarization, interacts with PINK1; the interaction is required for PINK1 accumulation at the outer mitochondrial membrane, kinase activation by autophosphorylation and PRKN recruitement to mitochondria.

The protein resides in the mitochondrion inner membrane. Its function is as follows. Essential component of the TIM23 complex, a complex that mediates the translocation of transit peptide-containing proteins across the mitochondrial inner membrane. Has a role in the activation of stress-induced mitophagy by protecting PINK1 from OMA1-mediated degradation and facilitating its accumulation at the outer mitochondrial membrane in response to depolarization. This is Mitochondrial import inner membrane translocase subunit Tim23 (Timm23) from Rattus norvegicus (Rat).